The following is a 674-amino-acid chain: Secretin GspD (674 aa).

The first 24 residues, 1–24 (MKYWLKKSSWLLAGSLLSTPLAMA), serve as a signal peptide directing secretion. The interval 25–121 (NEFSASFKGT…VLSGEERANG (97 aa)) is N0. Positions 123–187 (EVITQVVAVK…EIIRRVDQAG (65 aa)) are N1. The interval 188–261 (DKEIEVVELN…LIKQLDVEMA (74 aa)) is N2. The interval 264–338 (GNNRVVYLKY…AMLEVIGQLD (75 aa)) is N3. Residues 343–612 (QVLIEALIVE…VFIKPTIIRD (270 aa)) form a secretin region. The segment at 395–417 (DTTQTKAVYDTNNNFLRNETTTT) is cap gate. The tract at residues 614–674 (VTADGITQRK…AFIEQMEAKQ (61 aa)) is s domain.

Belongs to the bacterial secretin family. GSP D subfamily. In terms of assembly, forms a cylindrical channel with 15 subunits; unlike E.coli no 16-subunit channels are seen. The closed pentadeacameric channels are 195 Angstroms long and 145 Angstroms in diameter. Each subunit turns in a clock-wise manner around the channel.

Its subcellular location is the cell outer membrane. Its function is as follows. Involved in a type II secretion system (T2SS, formerly general secretion pathway, GSP) for the export of proteins. Required for secretion of cholera toxin through the outer membrane. This subunit forms the outer membrane channel. The chain is Secretin GspD (epsD) from Vibrio cholerae serotype O1 (strain ATCC 39315 / El Tor Inaba N16961).